The sequence spans 50 residues: Large ribosomal subunit protein bL36B (50 aa).

The protein belongs to the bacterial ribosomal protein bL36 family.

This is Large ribosomal subunit protein bL36B from Pseudomonas aeruginosa (strain UCBPP-PA14).